The following is a 157-amino-acid chain: Protein Smg (157 aa).

Belongs to the Smg family.

The chain is Protein Smg from Shigella boydii serotype 18 (strain CDC 3083-94 / BS512).